Reading from the N-terminus, the 340-residue chain is MKADVQEIRQGYGEIRLFPESVDDIWHLSHLIAPGDLVFAQTFRSVETATDKLRPEKAEKRPVRIGIRVEKVEFHQYSSRLRVTGLIESGPDVGSYHTLNLEPNFEVSVIRFWSKSDRERVDRAVNSSGSGLVHVLAIEEGEAELFRIRQYGPEQVLTITMGSGKGAPVDSREGFFIEAATPLLQITGPVIIAGPGFIKDDFARFLKNRYPAIAANSMVVETRRIGRGAVQEVIGQGVIGKIAGDLQLGREVQVMDEVLKRIAMEGLITYGRAEVGQAISFGAADQVIVSDRLIRDPEVARLMEQAEQMNATVTVLSSCFEPGERLWALGGIAALLRYAL.

This sequence belongs to the eukaryotic release factor 1 family. Pelota subfamily. As to quaternary structure, monomer. The cofactor is a divalent metal cation.

Its subcellular location is the cytoplasm. In terms of biological role, may function in recognizing stalled ribosomes, interact with stem-loop structures in stalled mRNA molecules, and effect endonucleolytic cleavage of the mRNA. May play a role in the release non-functional ribosomes and degradation of damaged mRNAs. Has endoribonuclease activity. The sequence is that of Protein pelota homolog from Methanosphaerula palustris (strain ATCC BAA-1556 / DSM 19958 / E1-9c).